The chain runs to 69 residues: Large ribosomal subunit protein uL29 (69 aa).

It belongs to the universal ribosomal protein uL29 family.

This is Large ribosomal subunit protein uL29 from Thermoanaerobacter pseudethanolicus (strain ATCC 33223 / 39E) (Clostridium thermohydrosulfuricum).